The chain runs to 77 residues: Serine protease inhibitor 2 (77 aa).

The first 17 residues, 1–17 (MMFTPLIVLTLLVLATA), serve as a signal peptide directing secretion. 5 disulfide bridges follow: cysteine 21/cysteine 53, cysteine 30/cysteine 48, cysteine 33/cysteine 44, cysteine 37/cysteine 74, and cysteine 55/cysteine 68. The TIL domain occupies 21–74 (CGPNEQWSDCPKCELQCGESDKPCATICGEPKCYCSPDKYRRIPDGRCIRKIQC).

The protein localises to the secreted. Its function is as follows. Defends the organism against the host's proteinases. The protein is Serine protease inhibitor 2 of Anisakis simplex (Herring worm).